We begin with the raw amino-acid sequence, 444 residues long: Tol-Pal system protein TolB (444 aa).

An N-terminal signal peptide occupies residues Met1–Ala19.

Belongs to the TolB family. The Tol-Pal system is composed of five core proteins: the inner membrane proteins TolA, TolQ and TolR, the periplasmic protein TolB and the outer membrane protein Pal. They form a network linking the inner and outer membranes and the peptidoglycan layer.

It localises to the periplasm. Part of the Tol-Pal system, which plays a role in outer membrane invagination during cell division and is important for maintaining outer membrane integrity. This is Tol-Pal system protein TolB from Rickettsia peacockii (strain Rustic).